Reading from the N-terminus, the 214-residue chain is Auxin-binding protein ABP20 (214 aa).

The signal sequence occupies residues 1 to 23 (MPQATMIFPILFTFFLLLSSSNA). Cys-29 and Cys-44 are disulfide-bonded. Positions 58 to 204 (SGLGIAGNTS…TTFLDAAQIK (147 aa)) constitute a Cupin type-1 domain. The N-linked (GlcNAc...) asparagine glycan is linked to Asn-65. The Mn(2+) site is built by His-106, His-108, Glu-113, and His-152.

It belongs to the germin family. Interacts with ABP19.

The protein localises to the secreted. Its subcellular location is the extracellular space. It localises to the apoplast. It is found in the cell wall. Functionally, probable receptor for the plant growth-promoting hormone auxin. The sequence is that of Auxin-binding protein ABP20 (ABP20) from Prunus persica (Peach).